The following is a 488-amino-acid chain: 3-octaprenyl-4-hydroxybenzoate carboxy-lyase (488 aa).

Position 172 (N172) interacts with Mn(2+). Prenylated FMN contacts are provided by residues 175 to 177, 189 to 191, and 194 to 195; these read IYR, RWL, and RG. E238 contacts Mn(2+). The Proton donor role is filled by D287.

Belongs to the UbiD family. As to quaternary structure, homohexamer. The cofactor is prenylated FMN. It depends on Mn(2+) as a cofactor.

Its subcellular location is the cell membrane. It carries out the reaction a 4-hydroxy-3-(all-trans-polyprenyl)benzoate + H(+) = a 2-(all-trans-polyprenyl)phenol + CO2. The protein operates within cofactor biosynthesis; ubiquinone biosynthesis. Its function is as follows. Catalyzes the decarboxylation of 3-octaprenyl-4-hydroxy benzoate to 2-octaprenylphenol, an intermediate step in ubiquinone biosynthesis. The sequence is that of 3-octaprenyl-4-hydroxybenzoate carboxy-lyase from Pseudomonas syringae pv. syringae (strain B728a).